The primary structure comprises 805 residues: MEGSVVVSEKKRISSERRKEKSRDAARCRRSNESEVFYELSHELPLPHNVSSHLDKASIMRLDHQLPAVEKVADAGDLDGETELDKQLNCFYLKALEGFVLVLTEEGDMIYLSENVNKCMGLTQFELTGHSVFDFTHPCDHEELREMLTFRNGPAKKRKRTNHREKFLPSYEMYINQSWKNREYKVSHMEGPSLYRTHACIYDNANNQNHCGYKKPPMTCMVVICEPIPHPSNIEFPLDSKTFLSRHSLDMKFSYCDERVTELVGYEPDELLGRSVYEYYHALDSDHLTKPNYNMFTKGQVTTGQYRMLAKKGGYVWVETQATVIYNSKNSQPQCIVCVNYVLSEVVEKDLILSLGQTASVLIPVESQEIKMPEIFTELNEENNSECLFDKLKQEPESLTVLAPDAGDEIIPLDFSSGDSDKPYEDVPLYNDVMLHSTSNKLESTPITPLPAPEMPKPLRSNVDPALNREVVIKMESNPRTTCASIHHSTAIQARQPFRYQFQSEPSTEPNTPEYCFDVDSEMASEFKLDLVEKLFAIDTEAKAPFYYPGNDLDLEMLAPYIPMDDDFQLRTFDQLSSLECDSSIPQTLGSMTTLFHQSLSPSTSDFKPEDAMSDLKTIIQSPVHMMKESTSAPVSPYNGNRSRTSSPVRPAKAVVDKTEKSRPGTPNLPVPLNKRCTILDEELNPKMICFTQCTAEKRKMESDGPLFQAIGIGTLFQTNVDPGPNSSLQWKRVKGSDSERLSSAEQRTILLLSTDMASQLLGQSFDGTVLPQLTGYDCEVNAPVHGTRNLLQGEELLRALDQAN.

The disordered stretch occupies residues 1–26; it reads MEGSVVVSEKKRISSERRKEKSRDAA. The segment covering 8–26 has biased composition (basic and acidic residues); sequence SEKKRISSERRKEKSRDAA. A bHLH domain is found at 17–70; the sequence is RRKEKSRDAARCRRSNESEVFYELSHELPLPHNVSSHLDKASIMRLDHQLPAVE. 2 PAS domains span residues 85–157 and 229–300; these read DKQL…PAKK and PHPS…TKGQ. The region spanning 303 to 346 is the PAC domain; it reads TGQYRMLAKKGGYVWVETQATVIYNSKNSQPQCIVCVNYVLSEV. 4-hydroxyproline is present on residues proline 404 and proline 560. Residues 628 to 669 form a disordered region; it reads KESTSAPVSPYNGNRSRTSSPVRPAKAVVDKTEKSRPGTPNL. The span at 629-648 shows a compositional bias: polar residues; it reads ESTSAPVSPYNGNRSRTSSP. (3S)-3-hydroxyasparagine is present on asparagine 782.

As to quaternary structure, efficient DNA binding requires heterodimerization of an alpha and a beta/ARNT subunit. Post-translationally, in normoxia, is hydroxylated on Pro-404 and Pro-560. The hydroxylated prolines promote interaction with VHL, initiating rapid ubiquitination and subsequent proteasomal degradation. Under hypoxia, proline hydroxylation is impaired and ubiquitination is attenuated, resulting in stabilization. In normoxia, is hydroxylated on Asn-782, thus abrogating interaction with CREBBP and EP300 and preventing transcriptional activation. In terms of processing, the iron and 2-oxoglutarate dependent 3-hydroxylation of asparagine is (S) stereospecific within HIF CTAD domains.

The protein localises to the cytoplasm. It is found in the nucleus. It localises to the nucleus speckle. With respect to regulation, induced by reactive oxygen species (ROS). Functionally, functions as a master transcriptional regulator of the adaptive response to hypoxia. Under hypoxic conditions, activates the transcription of over 40 genes, including erythropoietin, glucose transporters, glycolytic enzymes, vascular endothelial growth factor, HILPDA, and other genes whose protein products increase oxygen delivery or facilitate metabolic adaptation to hypoxia. Plays an essential role in embryonic vascularization, tumor angiogenesis and pathophysiology of ischemic disease. The polypeptide is Hypoxia-inducible factor 1-alpha (hif1a) (Xenopus laevis (African clawed frog)).